The sequence spans 745 residues: Probable endochitinase ARB_07371 (745 aa).

The signal sequence occupies residues 1-23 (MALPKTIMAFIAFISFLVSTTFA). In terms of domain architecture, GH18 spans 30–351 (TNVVTYWGQG…SNIKRLLLNN (322 aa)). The active-site Proton donor is the Glu-178. Disordered regions lie at residues 351–372 (NDPSRPTTTSKTMSSTKTSMST) and 395–446 (WSMP…TTEI). Low complexity predominate over residues 357-372 (TTTSKTMSSTKTSMST). N-linked (GlcNAc...) asparagine glycans are attached at residues Asn-438 and Asn-484. Positions 651-715 (SEPMTPTQVP…EMGGNGGDRT (65 aa)) are disordered. The GPI-anchor amidated glycine moiety is linked to residue Gly-720. The propeptide at 721-745 (GAGVVSPSFSVVVIVLGSIVYHIMQ) is removed in mature form.

Belongs to the glycosyl hydrolase 18 family. Chitinase class III subfamily.

It is found in the cell membrane. The protein localises to the secreted. The protein resides in the cell wall. It carries out the reaction Random endo-hydrolysis of N-acetyl-beta-D-glucosaminide (1-&gt;4)-beta-linkages in chitin and chitodextrins.. Functionally, GPI-anchored chitinase involved in the degradation of chitin, a component of the cell walls of fungi and exoskeletal elements of some animals (including worms and arthropods). Required to reshape the cell wall at the sites where cell wall remodeling and/or cell wall maturation actively take place such as sites of conidia formation. This is Probable endochitinase ARB_07371 from Arthroderma benhamiae (strain ATCC MYA-4681 / CBS 112371) (Trichophyton mentagrophytes).